The following is a 282-amino-acid chain: ATP phosphoribosyltransferase (282 aa).

The protein belongs to the ATP phosphoribosyltransferase family. Long subfamily. It depends on Mg(2+) as a cofactor.

The protein resides in the cytoplasm. The catalysed reaction is 1-(5-phospho-beta-D-ribosyl)-ATP + diphosphate = 5-phospho-alpha-D-ribose 1-diphosphate + ATP. Its pathway is amino-acid biosynthesis; L-histidine biosynthesis; L-histidine from 5-phospho-alpha-D-ribose 1-diphosphate: step 1/9. Feedback inhibited by histidine. Functionally, catalyzes the condensation of ATP and 5-phosphoribose 1-diphosphate to form N'-(5'-phosphoribosyl)-ATP (PR-ATP). Has a crucial role in the pathway because the rate of histidine biosynthesis seems to be controlled primarily by regulation of HisG enzymatic activity. In Haloarcula marismortui (strain ATCC 43049 / DSM 3752 / JCM 8966 / VKM B-1809) (Halobacterium marismortui), this protein is ATP phosphoribosyltransferase.